We begin with the raw amino-acid sequence, 280 residues long: Band 7 protein AGAP004871 (280 aa).

The chain crosses the membrane as a helical span at residues 23 to 43 (ILIFLSWVLVVLTMPFSLLVC).

Belongs to the band 7/mec-2 family.

The protein localises to the membrane. This Anopheles gambiae (African malaria mosquito) protein is Band 7 protein AGAP004871.